The following is a 580-amino-acid chain: G1/S-specific cyclin CLN3 (580 aa).

Over residues 454-469 (FTPTSSSSSPSPFNSP) the composition is skewed to low complexity. Disordered stretches follow at residues 454 to 498 (FTPT…QNSF) and 546 to 580 (MATA…KKTR). Composition is skewed to polar residues over residues 470-480 (YKTSSSMTTPD) and 563-580 (TSSV…KKTR).

The protein belongs to the cyclin family.

Its function is as follows. Essential for the control of the cell cycle at the G1/S (start) transition. CLN3 may be an upstream activator of the G1 cyclins which directly catalyze start. This chain is G1/S-specific cyclin CLN3 (CLN3), found in Saccharomyces cerevisiae (strain ATCC 204508 / S288c) (Baker's yeast).